The chain runs to 923 residues: Neuropilin-1a (923 aa).

Positions 1 to 19 are cleaved as a signal peptide; sequence MHCGLVLILFTGIFLIVSA. Over 20 to 856 the chain is Extracellular; the sequence is LKNDKCGDNI…AGNMLKTLDP (837 aa). Intrachain disulfides connect C25–C52, C80–C102, and C145–C171. CUB domains follow at residues 25–139 and 145–263; these read CGDN…YEIF and CSRN…FTVL. N148 carries an N-linked (GlcNAc...) asparagine glycan. Ca(2+) is bound by residues E193, D207, and D248. Cysteines 204 and 226 form a disulfide. N259 carries an N-linked (GlcNAc...) asparagine glycan. 2 disulfides stabilise this stretch: C273–C422 and C429–C581. F5/8 type C domains follow at residues 273 to 422 and 429 to 581; these read CTEP…VYGC and CSGM…LLGC. A glycan (N-linked (GlcNAc...) asparagine) is linked at N520. Positions 587-624 are disordered; it reads TVPPTTPAASTTPSDECDDDQANCHSGTGDGYDQTGGT. O-linked (Xyl...) (chondroitin sulfate) serine; alternate glycosylation occurs at S612. A glycan (O-linked (Xyl...) (heparan sulfate) serine; alternate) is linked at S612. The MAM domain maps to 642–811; that stretch reads FACDFGWAND…DNVNMADCKD (170 aa). A helical membrane pass occupies residues 857–877; it reads ILITIIAMSALGVFLGAICGV. Over 878 to 923 the chain is Cytoplasmic; it reads VLYCACSHSGMSDRNLSALENYNFELVDGVKLKKDKLNSQNSYSEA.

It belongs to the neuropilin family.

The protein resides in the membrane. Its function is as follows. Receptor involved in the development of the cardiovascular system, in angiogenesis, in the formation of certain neuronal circuits and in organogenesis outside the nervous system. It mediates the chemorepulsant activity of semaphorins. Regulates angiogenesis through a VEGF-dependent pathway. The protein is Neuropilin-1a (nrp1a) of Danio rerio (Zebrafish).